Consider the following 94-residue polypeptide: Citrate lyase acyl carrier protein (94 aa).

Ser-14 is subject to O-(phosphoribosyl dephospho-coenzyme A)serine.

Belongs to the CitD family. Oligomer with a subunit composition of (alpha,beta,gamma)6.

It localises to the cytoplasm. Its function is as follows. Covalent carrier of the coenzyme of citrate lyase. The protein is Citrate lyase acyl carrier protein of Fusobacterium nucleatum subsp. nucleatum (strain ATCC 25586 / DSM 15643 / BCRC 10681 / CIP 101130 / JCM 8532 / KCTC 2640 / LMG 13131 / VPI 4355).